A 274-amino-acid chain; its full sequence is Copper chaperone for superoxide dismutase (274 aa).

Positions 11 to 74 (ACMLEFAVQM…LLEDTGRQAV (64 aa)) constitute an HMA domain. Residues Cys22 and Cys25 each coordinate Cu cation. Lys76 participates in a covalent cross-link: Glycyl lysine isopeptide (Lys-Gly) (interchain with G-Cter in ubiquitin). The interval 88–234 (AAVAILGGSG…LACGIIARSA (147 aa)) is superoxide dismutase-like. Cys141 and Cys227 form a disulfide bridge. Zn(2+) is bound by residues His147, His155, His164, and Asp167. Glycyl lysine isopeptide (Lys-Gly) (interchain with G-Cter in ubiquitin) cross-links involve residues Lys189, Lys216, and Lys241. 2 residues coordinate Cu cation: Cys244 and Cys246.

The protein in the C-terminal section; belongs to the Cu-Zn superoxide dismutase family. In terms of assembly, homodimer, and heterodimer with SOD1. Interacts with COMMD1. Interacts with XIAP/BIRC4. Interacts with SLC31A1(via C-terminal domain); this interaction is Cu(1+)-mediated. The heterodimer CCS:SOD1 interacts with SLC31A1; this heterotrimer is Cu(1+)-mediated and its maintenance is regulated through SOD1 activation. It depends on Cu(2+) as a cofactor. Zn(2+) is required as a cofactor. Ubiquitinion by XIAP/BIRC4 leads to enhancement of its chaperone activity toward its physiologic target, SOD1, rather than proteasomal degradation. XIAP/BIRC4 preferentially ubiquitinates at Lys-241.

It is found in the cytoplasm. Delivers copper to copper zinc superoxide dismutase (SOD1). This is Copper chaperone for superoxide dismutase from Sus scrofa (Pig).